The following is a 503-amino-acid chain: MPSVMEKSHGSSAVISRNRAKSDSLGNSEEESSEDEAPRDSMIRVGSDYQAQIPECKPDNTSPSGNVELKGMLVWSPSQFVSDAKLNEYITMAKEKHGYNVEQSLGMLLWHKHDVERSLADLANFTPFPEEWSVEDKVLFEQAFSFHGKSFQRIQQMLPEKLIPSLVKYYYSWKKTRSRTSVMDRQARRLQAKREEGMEEVEDQIKMSDNETDVTETKKEAPVPQKVVSGAVSGKTGPVRKEPLISQYRHHPLRSRQRPPKGIHLNKSDVSAVCASSEMPAIALCQLETQLISLKRQVQNIKQMNSSLKESLEGGISEMRPPELNIKLNARWTTDEQLLAVQAVRKYGKDFQAISEVLGNKTPSQVKTFFISYRRRFNLEEVLQEWEAEQEPSPPPASTDMSNKTSGSSQTPNEEDDEVQITSVSSSSQPAPPAAAAAASLSLPPPLLRPAIPCAPTLHRQPPPLQPGRLLQPRPPPLVRPAPRQSPRAPPALVGSHAESTFS.

Residues 1 to 62 (MPSVMEKSHG…IPECKPDNTS (62 aa)) are disordered. The ELM2 domain maps to 41 to 126 (SMIRVGSDYQ…RSLADLANFT (86 aa)). An SANT 1 domain is found at 127 to 178 (PFPEEWSVEDKVLFEQAFSFHGKSFQRIQQMLPEKLIPSLVKYYYSWKKTRS). Coiled-coil stretches lie at residues 182–206 (VMDR…DQIK) and 286–314 (QLET…SLEG). In terms of domain architecture, SANT 2 spans 327–378 (KLNARWTTDEQLLAVQAVRKYGKDFQAISEVLGNKTPSQVKTFFISYRRRFN). The tract at residues 385–503 (EWEAEQEPSP…VGSHAESTFS (119 aa)) is disordered. A compositionally biased stretch (polar residues) spans 399–412 (TDMSNKTSGSSQTP). A compositionally biased stretch (low complexity) spans 423-442 (SVSSSSQPAPPAAAAAASLS).

The protein belongs to the CoREST family.

It is found in the nucleus. May act as a component of a corepressor complex that represses transcription. This Xenopus laevis (African clawed frog) protein is REST corepressor 2 (rcor2).